The sequence spans 402 residues: Phosphoglycerate kinase (402 aa).

Substrate is bound by residues 24–26, R40, 63–66, R122, and R155; these read DFN and HFGR. ATP is bound by residues K206, G297, E328, and 357 to 360; that span reads GGDS.

It belongs to the phosphoglycerate kinase family. As to quaternary structure, monomer.

It localises to the cytoplasm. It carries out the reaction (2R)-3-phosphoglycerate + ATP = (2R)-3-phospho-glyceroyl phosphate + ADP. It participates in carbohydrate degradation; glycolysis; pyruvate from D-glyceraldehyde 3-phosphate: step 2/5. The protein is Phosphoglycerate kinase of Prochlorococcus marinus (strain SARG / CCMP1375 / SS120).